We begin with the raw amino-acid sequence, 227 residues long: Agamous-like MADS-box protein AGL8 homolog (227 aa).

The MADS-box domain maps to 3 to 57 (RGRVQLKRIENKINRQVTFSKRRSGLLKKAHEISVLCDAEVGLIVFSTKGKLFEY). A K-box domain is found at 88-178 (PVSWTLEHRK…SKKVKEREKS (91 aa)).

Flower specific.

It is found in the nucleus. Functionally, probable transcription factor. This chain is Agamous-like MADS-box protein AGL8 homolog (TDR4), found in Solanum lycopersicum (Tomato).